The following is a 497-amino-acid chain: Kynureninase (497 aa).

Residues 59–86 (GRLPAYPPNHAKPGETATAQNGTSNTND) form a disordered region. Over residues 75–86 (ATAQNGTSNTND) the composition is skewed to polar residues. Pyridoxal 5'-phosphate-binding positions include Leu-166, Thr-167, 194 to 197 (FPSD), Asp-278, His-281, and Tyr-303. Lys-304 carries the post-translational modification N6-(pyridoxal phosphate)lysine. Trp-337 and Asn-365 together coordinate pyridoxal 5'-phosphate.

It belongs to the kynureninase family. In terms of assembly, homodimer. The cofactor is pyridoxal 5'-phosphate.

The protein resides in the cytoplasm. It catalyses the reaction L-kynurenine + H2O = anthranilate + L-alanine + H(+). The enzyme catalyses 3-hydroxy-L-kynurenine + H2O = 3-hydroxyanthranilate + L-alanine + H(+). The protein operates within amino-acid degradation; L-kynurenine degradation; L-alanine and anthranilate from L-kynurenine: step 1/1. Its pathway is cofactor biosynthesis; NAD(+) biosynthesis; quinolinate from L-kynurenine: step 2/3. Functionally, catalyzes the cleavage of L-kynurenine (L-Kyn) and L-3-hydroxykynurenine (L-3OHKyn) into anthranilic acid (AA) and 3-hydroxyanthranilic acid (3-OHAA), respectively. In Pyricularia oryzae (strain 70-15 / ATCC MYA-4617 / FGSC 8958) (Rice blast fungus), this protein is Kynureninase.